A 76-amino-acid chain; its full sequence is Defensin-like protein 155 (76 aa).

A signal peptide spans 1-27 (MAKISCSYLLILMLALSVFSVVEKAKG). Cystine bridges form between C31-C76, C40-C59, C45-C70, and C49-C72.

The protein belongs to the DEFL family.

It is found in the secreted. This is Defensin-like protein 155 (LCR36) from Arabidopsis thaliana (Mouse-ear cress).